The chain runs to 153 residues: Peptide deformylase (153 aa).

Residues Cys-87 and His-129 each contribute to the Fe cation site. Glu-130 is an active-site residue. His-133 provides a ligand contact to Fe cation.

It belongs to the polypeptide deformylase family. The cofactor is Fe(2+).

The catalysed reaction is N-terminal N-formyl-L-methionyl-[peptide] + H2O = N-terminal L-methionyl-[peptide] + formate. Its function is as follows. Removes the formyl group from the N-terminal Met of newly synthesized proteins. Requires at least a dipeptide for an efficient rate of reaction. N-terminal L-methionine is a prerequisite for activity but the enzyme has broad specificity at other positions. The polypeptide is Peptide deformylase (Dictyoglomus thermophilum (strain ATCC 35947 / DSM 3960 / H-6-12)).